Consider the following 73-residue polypeptide: Small ribosomal subunit protein bS18c (73 aa).

This sequence belongs to the bacterial ribosomal protein bS18 family. Part of the 30S ribosomal subunit.

It localises to the plastid. The protein localises to the chloroplast. The sequence is that of Small ribosomal subunit protein bS18c from Rhodomonas salina (Cryptomonas salina).